The chain runs to 364 residues: Protein-glutamate methylesterase/protein-glutamine glutaminase 3 (364 aa).

A Response regulatory domain is found at 7-124 (RVLIVDDSAS…THALLEASAR (118 aa)). A 4-aspartylphosphate modification is found at D58. Residues 167 to 358 (PTTERLVCIG…REIMLWQDAK (192 aa)) enclose the CheB-type methylesterase domain. Active-site residues include S178, H204, and D300.

This sequence belongs to the CheB family. Post-translationally, phosphorylated by CheA. Phosphorylation of the N-terminal regulatory domain activates the methylesterase activity.

The protein resides in the cytoplasm. It catalyses the reaction [protein]-L-glutamate 5-O-methyl ester + H2O = L-glutamyl-[protein] + methanol + H(+). It carries out the reaction L-glutaminyl-[protein] + H2O = L-glutamyl-[protein] + NH4(+). Its function is as follows. Involved in chemotaxis. Part of a chemotaxis signal transduction system that modulates chemotaxis in response to various stimuli. Catalyzes the demethylation of specific methylglutamate residues introduced into the chemoreceptors (methyl-accepting chemotaxis proteins or MCP) by CheR. Also mediates the irreversible deamidation of specific glutamine residues to glutamic acid. The sequence is that of Protein-glutamate methylesterase/protein-glutamine glutaminase 3 from Rhodopseudomonas palustris (strain BisB18).